The following is a 449-amino-acid chain: UDP-N-acetylmuramoylalanine--D-glutamate ligase (449 aa).

118–124 lines the ATP pocket; it reads GSNGKTT.

The protein belongs to the MurCDEF family.

The protein localises to the cytoplasm. The catalysed reaction is UDP-N-acetyl-alpha-D-muramoyl-L-alanine + D-glutamate + ATP = UDP-N-acetyl-alpha-D-muramoyl-L-alanyl-D-glutamate + ADP + phosphate + H(+). It participates in cell wall biogenesis; peptidoglycan biosynthesis. In terms of biological role, cell wall formation. Catalyzes the addition of glutamate to the nucleotide precursor UDP-N-acetylmuramoyl-L-alanine (UMA). The chain is UDP-N-acetylmuramoylalanine--D-glutamate ligase from Oceanobacillus iheyensis (strain DSM 14371 / CIP 107618 / JCM 11309 / KCTC 3954 / HTE831).